Reading from the N-terminus, the 68-residue chain is Sec-independent protein translocase protein TatA (68 aa).

Residues 1–21 (MGSFSIWHWLIVLAVVLLLFG) form a helical membrane-spanning segment. The interval 42–68 (GMGDDEVASADKSVDGKTVDHKSDEVR) is disordered. Basic and acidic residues predominate over residues 53 to 68 (KSVDGKTVDHKSDEVR).

The protein belongs to the TatA/E family. The Tat system comprises two distinct complexes: a TatABC complex, containing multiple copies of TatA, TatB and TatC subunits, and a separate TatA complex, containing only TatA subunits. Substrates initially bind to the TatABC complex, which probably triggers association of the separate TatA complex to form the active translocon.

It localises to the cell inner membrane. Its function is as follows. Part of the twin-arginine translocation (Tat) system that transports large folded proteins containing a characteristic twin-arginine motif in their signal peptide across membranes. TatA could form the protein-conducting channel of the Tat system. The chain is Sec-independent protein translocase protein TatA from Rhizobium meliloti (strain 1021) (Ensifer meliloti).